Reading from the N-terminus, the 43-residue chain is U5-hexatoxin-Mr1a (43 aa).

4 disulfide bridges follow: cysteine 1–cysteine 16, cysteine 8–cysteine 21, cysteine 15–cysteine 36, and cysteine 17–cysteine 43.

It belongs to the neurotoxin 35 family. Contains 4 disulfide bonds. Expressed by the venom gland.

The protein localises to the secreted. This toxin blocks the neuromuscular transmission, and also acts on muscle. It exerts an effect of first exciting and then inhibiting the contraction of muscle. This toxin is active only against mammals. The protein is U5-hexatoxin-Mr1a of Macrothele raveni (Funnel-web spider).